A 33-amino-acid chain; its full sequence is Protamine TP14 (33 aa).

Residues 1–33 (MPRRRRSSRPPVRRRRRPRVSRRRRRRGGRRRR) form a disordered region.

In terms of tissue distribution, testis.

Its subcellular location is the nucleus. The protein resides in the chromosome. Its function is as follows. Protamines substitute for histones in the chromatin of sperm during the haploid phase of spermatogenesis. They compact sperm DNA into a highly condensed, stable and inactive complex. This chain is Protamine TP14, found in Oncorhynchus mykiss (Rainbow trout).